Here is a 579-residue protein sequence, read N- to C-terminus: Maintenance of mitochondrial morphology protein 1 (579 aa).

Residues 1-43 (MQQPQQQDLQIGLPYAPVQPPIPSPAAYFAYLPSPSRWTFTQG) lie on the Lumenal side of the membrane. The helical transmembrane segment at 44–64 (LIVGQVSMVIVALLLIRYVIF) threads the bilayer. Residues 65 to 579 (EDSATALEKE…GLRNRPGFVQ (515 aa)) are Cytoplasmic-facing. The SMP-LTD domain occupies 150-391 (LPESADWLNV…WPRYWSLTLP (242 aa)). Disordered regions lie at residues 309-332 (VLPT…RSRH), 460-479 (RPSL…SGLR), and 558-579 (SSVL…GFVQ). Low complexity-rich tracts occupy residues 311–328 (PTAN…ATPP) and 465–476 (SSRPPHVRSSSS).

It belongs to the MMM1 family. Homodimer. Component of the ER-mitochondria encounter structure (ERMES) or MDM complex, composed of MMM1, MDM10, MDM12 and MDM34. An MMM1 homodimer associates with one molecule of MDM12 on each side in a pairwise head-to-tail manner, and the SMP-LTD domains of MMM1 and MDM12 generate a continuous hydrophobic tunnel for phospholipid trafficking.

It is found in the endoplasmic reticulum membrane. Functionally, component of the ERMES/MDM complex, which serves as a molecular tether to connect the endoplasmic reticulum (ER) and mitochondria. Components of this complex are involved in the control of mitochondrial shape and protein biogenesis, and function in nonvesicular lipid trafficking between the ER and mitochondria. The MDM12-MMM1 subcomplex functions in the major beta-barrel assembly pathway that is responsible for biogenesis of all outer membrane beta-barrel proteins, and acts in a late step after the SAM complex. The MDM10-MDM12-MMM1 subcomplex further acts in the TOM40-specific pathway after the action of the MDM12-MMM1 complex. Essential for establishing and maintaining the structure of mitochondria and maintenance of mtDNA nucleoids. This Mycosarcoma maydis (Corn smut fungus) protein is Maintenance of mitochondrial morphology protein 1.